Here is a 450-residue protein sequence, read N- to C-terminus: UDP-N-acetylmuramoylalanine--D-glutamate ligase (450 aa).

119-125 provides a ligand contact to ATP; that stretch reads GSNGKTT.

This sequence belongs to the MurCDEF family.

The protein resides in the cytoplasm. It catalyses the reaction UDP-N-acetyl-alpha-D-muramoyl-L-alanine + D-glutamate + ATP = UDP-N-acetyl-alpha-D-muramoyl-L-alanyl-D-glutamate + ADP + phosphate + H(+). The protein operates within cell wall biogenesis; peptidoglycan biosynthesis. Its function is as follows. Cell wall formation. Catalyzes the addition of glutamate to the nucleotide precursor UDP-N-acetylmuramoyl-L-alanine (UMA). In Streptococcus pneumoniae (strain JJA), this protein is UDP-N-acetylmuramoylalanine--D-glutamate ligase.